Consider the following 489-residue polypeptide: Putative (R)-citramalate synthase CimA (489 aa).

The 253-residue stretch at 3-255 (VKILDTTLRD…KTKIKKERLY (253 aa)) folds into the Pyruvate carboxyltransferase domain.

The protein belongs to the alpha-IPM synthase/homocitrate synthase family. In terms of assembly, homodimer.

The enzyme catalyses pyruvate + acetyl-CoA + H2O = (3R)-citramalate + CoA + H(+). It participates in amino-acid biosynthesis; L-isoleucine biosynthesis; 2-oxobutanoate from pyruvate: step 1/3. Catalyzes the condensation of pyruvate and acetyl-coenzyme A to form (R)-citramalate. In Archaeoglobus fulgidus (strain ATCC 49558 / DSM 4304 / JCM 9628 / NBRC 100126 / VC-16), this protein is Putative (R)-citramalate synthase CimA (cimA).